A 164-amino-acid chain; its full sequence is Probable calcium-binding protein CML17 (164 aa).

4 consecutive EF-hand domains span residues 4 to 39 (DQQA…LGMP), 40 to 75 (VHRE…VMRV), 88 to 123 (VDEA…LGIK), and 126 to 161 (RTAE…GAFA). Residues Asp-17, Asp-19, Asp-21, Arg-23, Glu-28, Asp-53, Asn-55, Asp-57, Cys-59, Glu-64, Asp-101, Asn-103, Asp-105, Glu-112, Asp-139, Asp-141, Asp-143, Arg-145, and Glu-150 each coordinate Ca(2+).

Potential calcium sensor. The polypeptide is Probable calcium-binding protein CML17 (CML17) (Oryza sativa subsp. japonica (Rice)).